The following is a 133-amino-acid chain: Large ribosomal subunit protein bL17 (133 aa).

This sequence belongs to the bacterial ribosomal protein bL17 family. As to quaternary structure, part of the 50S ribosomal subunit. Contacts protein L32.

The polypeptide is Large ribosomal subunit protein bL17 (Nitratidesulfovibrio vulgaris (strain ATCC 29579 / DSM 644 / CCUG 34227 / NCIMB 8303 / VKM B-1760 / Hildenborough) (Desulfovibrio vulgaris)).